We begin with the raw amino-acid sequence, 529 residues long: Listeriolysin O (529 aa).

A signal peptide spans 1-24 (MKKIMLVFITLILVSLPIAQQTEA). A run of 4 beta stranded transmembrane segments spans residues 214-227 (ESQLIAKFGTAFKA), 234-243 (VNFGAISEGK), 312-321 (STKVKAAFDA), and 329-341 (SGDVELTNIIKNS). Positions 483 to 493 (ECTGLAWEWWR) match the Conserved undecapeptide motif. Positions 515-516 (TL) match the Cholesterol binding motif.

Belongs to the cholesterol-dependent cytolysin family. In terms of assembly, homooligomeric pore complex of 35 to 50 subunits; when inserted in the host membrane.

It localises to the secreted. It is found in the host membrane. The protein localises to the host cell membrane. With respect to regulation, activity of listeriolysin O is regulated on multiple levels. It should be high in the phagosome, thereby allowing escape of the bacteria from the phagosomal compartment. Then, once inside the host cytosol, the activity must be controlled to prevent lysis of the host plasma membrane and loss of the intracellular environment. In terms of biological role, a cholesterol-dependent toxin that causes cytolysis by forming pores in cholesterol containing host membranes. After binding to target membranes, the protein undergoes a major conformation change, leading to its insertion in the host membrane and formation of an oligomeric pore complex. Cholesterol is required for binding to host membranes, membrane insertion and pore formation; cholesterol binding is mediated by a Thr-Leu pair in the C-terminus. Acts as a major virulence factor required for the escape of bacteria from phagosomal vacuoles and entry into the host cytosol. Can be reversibly inactivated by oxidation. The sequence is that of Listeriolysin O (hly) from Listeria monocytogenes serotype 4b (strain CLIP80459).